The chain runs to 334 residues: D-alanine--D-alanine ligase (334 aa).

The ATP-grasp domain occupies 111–315 (KRVCLSHGVP…YEDLCIEILR (205 aa)). 141–196 (AAEFGLPLMLKAPHEGSTIGIAKVETAEGMQAGFDLCAKYEAVVLVEQFVKGRELT) lines the ATP pocket. Residues Asp-268, Glu-282, and Asn-284 each coordinate Mg(2+).

It belongs to the D-alanine--D-alanine ligase family. Mg(2+) serves as cofactor. The cofactor is Mn(2+).

The protein resides in the cytoplasm. The catalysed reaction is 2 D-alanine + ATP = D-alanyl-D-alanine + ADP + phosphate + H(+). Its pathway is cell wall biogenesis; peptidoglycan biosynthesis. Cell wall formation. This Herminiimonas arsenicoxydans protein is D-alanine--D-alanine ligase.